The following is a 292-amino-acid chain: MKLAIYGKGGIGKSTTSCNISIALARRGKRVLQIGCDPKHDSTFTLTGFLIPTIIDTLQIKDYHYEDVWPEDVIHKGYGGVDRVEAGGPPAGAGCGGYVVGETVKLSKELNAFYEYDIILFDVLGDAVRGGFASPLNYADYCIIIADNGFDALLATNRIAASVREKARTRTHPLRLAGLVGNRTSERDLIDKYVEVCPMPILEILPLIEDIRVSRIKGKTLFEMVESQPYLNYVCDFYLNTADQILSKPEGIIPKEISDRELFSLLSDFYLNPVGNEEQENKENLLDSVVLI.

ATP is bound by residues 10–15 (GIGKST) and Lys-39. Mg(2+) is bound at residue Ser-14. Residue Cys-95 coordinates [4Fe-4S] cluster. An ATP-binding site is contributed by 182–183 (NR).

This sequence belongs to the NifH/BchL/ChlL family. In terms of assembly, homodimer. Protochlorophyllide reductase is composed of three subunits; ChlL, ChlN and ChlB. [4Fe-4S] cluster serves as cofactor.

It localises to the plastid. The protein resides in the chloroplast. The enzyme catalyses chlorophyllide a + oxidized 2[4Fe-4S]-[ferredoxin] + 2 ADP + 2 phosphate = protochlorophyllide a + reduced 2[4Fe-4S]-[ferredoxin] + 2 ATP + 2 H2O. It functions in the pathway porphyrin-containing compound metabolism; chlorophyll biosynthesis (light-independent). Functionally, component of the dark-operative protochlorophyllide reductase (DPOR) that uses Mg-ATP and reduced ferredoxin to reduce ring D of protochlorophyllide (Pchlide) to form chlorophyllide a (Chlide). This reaction is light-independent. The L component serves as a unique electron donor to the NB-component of the complex, and binds Mg-ATP. This is Light-independent protochlorophyllide reductase iron-sulfur ATP-binding protein from Huperzia lucidula (Shining clubmoss).